A 336-amino-acid polypeptide reads, in one-letter code: Aspartate--ammonia ligase (336 aa).

This sequence belongs to the class-II aminoacyl-tRNA synthetase family. AsnA subfamily.

The protein resides in the cytoplasm. It catalyses the reaction L-aspartate + NH4(+) + ATP = L-asparagine + AMP + diphosphate + H(+). It participates in amino-acid biosynthesis; L-asparagine biosynthesis; L-asparagine from L-aspartate (ammonia route): step 1/1. This is Aspartate--ammonia ligase from Limosilactobacillus reuteri (strain DSM 20016) (Lactobacillus reuteri).